A 464-amino-acid polypeptide reads, in one-letter code: Molybdate transporter 2 (464 aa).

The Tonoplast targeting signal signature appears at 8–9 (LL). 9 consecutive transmembrane segments (helical) span residues 33–53 (LSGA…LTLV), 62–82 (LIFT…PMPV), 116–136 (LLLG…LPVV), 172–192 (IWLG…IILS), 223–243 (LLSS…LCFI), 309–329 (VSIS…MPVC), 348–368 (SVIF…NSFV), 374–394 (FPIG…AMAS), and 404–424 (FIML…LGFG).

Belongs to the SLC26A/SulP transporter (TC 2.A.53) family. As to expression, expressed in leaves. Not detected in roots, shoots and seeds.

It is found in the vacuole membrane. Molybdate transporter required for vacuolar molybdate export during senescence. The chain is Molybdate transporter 2 (MOT2) from Arabidopsis thaliana (Mouse-ear cress).